We begin with the raw amino-acid sequence, 502 residues long: ATP synthase subunit alpha (502 aa).

169 to 176 contributes to the ATP binding site; sequence GDRQTGKT.

It belongs to the ATPase alpha/beta chains family. In terms of assembly, F-type ATPases have 2 components, CF(1) - the catalytic core - and CF(0) - the membrane proton channel. CF(1) has five subunits: alpha(3), beta(3), gamma(1), delta(1), epsilon(1). CF(0) has three main subunits: a(1), b(2) and c(9-12). The alpha and beta chains form an alternating ring which encloses part of the gamma chain. CF(1) is attached to CF(0) by a central stalk formed by the gamma and epsilon chains, while a peripheral stalk is formed by the delta and b chains.

The protein resides in the cell membrane. The enzyme catalyses ATP + H2O + 4 H(+)(in) = ADP + phosphate + 5 H(+)(out). Produces ATP from ADP in the presence of a proton gradient across the membrane. The alpha chain is a regulatory subunit. This is ATP synthase subunit alpha from Exiguobacterium sibiricum (strain DSM 17290 / CCUG 55495 / CIP 109462 / JCM 13490 / 255-15).